A 792-amino-acid polypeptide reads, in one-letter code: Ribonucleoside-diphosphate reductase large subunit (792 aa).

Positions 1-92 (MHVIKRDGRQ…VSNLHKETKK (92 aa)) constitute an ATP-cone domain. Residues 5 to 6 (KR), 11 to 17 (ERVMFDK), Thr53, and Asp57 contribute to the ATP site. Lys17 carries the N6-acetyllysine modification. Residues Ser202 and Ser217 each contribute to the GDP site. Residues Cys218 and Cys444 are joined by a disulfide bond. Residues 226-228 (DSI), Lys243, Arg256, and 263-264 (AG) each bind dTTP. Lys376 is subject to N6-acetyllysine. Asn427 lines the GDP pocket. Catalysis depends on Asn427, which acts as the Proton acceptor. Cys429 acts as the Cysteine radical intermediate in catalysis. Residues Glu431 and 604-607 (TAST) each bind GDP. Residue Glu431 is the Proton acceptor of the active site. The residue at position 751 (Thr751) is a Phosphothreonine.

Belongs to the ribonucleoside diphosphate reductase large chain family. In terms of assembly, heterodimer of a large and a small subunit. Interacts with RRM2B. Interacts with AHCYL1 which inhibits its activity.

It localises to the cytoplasm. It carries out the reaction a 2'-deoxyribonucleoside 5'-diphosphate + [thioredoxin]-disulfide + H2O = a ribonucleoside 5'-diphosphate + [thioredoxin]-dithiol. With respect to regulation, under complex allosteric control mediated by deoxynucleoside triphosphates and ATP binding to separate specificity and activation sites on the M1 subunit. The type of nucleotide bound at the specificity site determines substrate preference. It seems probable that ATP makes the enzyme reduce CDP and UDP, dGTP favors ADP reduction and dTTP favors GDP reduction. Stimulated by ATP and inhibited by dATP binding to the activity site, the dATP inhibition is mediated by AHCYL1 which stabilizes dATP in the site. In terms of biological role, provides the precursors necessary for DNA synthesis. Catalyzes the biosynthesis of deoxyribonucleotides from the corresponding ribonucleotides. In Mus musculus (Mouse), this protein is Ribonucleoside-diphosphate reductase large subunit (Rrm1).